We begin with the raw amino-acid sequence, 475 residues long: Ankyrin repeat, SAM and basic leucine zipper domain-containing protein 1 (475 aa).

A disordered region spans residues 1–25; sequence MAASALRGLPVAGGGESSESEDDGW. Residues Ser-17, Ser-18, and Ser-20 each carry the phosphoserine modification. ANK repeat units lie at residues 45–74, 78–107, 110–144, 148–177, 181–210, and 214–243; these read EKKE…SVDS, YGWT…NASF, DKQS…DPNV, RLMT…EVNT, NGYT…NKML, and DGKM…PLEG. The 63-residue stretch at 272-334 folds into the SAM domain; that stretch reads SYTAFGDLEV…KILAALKELQ (63 aa).

Interacts with DDX4, PIWIL1, RANBP9 and TDRD1. Expressed exclusively in the testis and ovary and at higher levels in the adult testis compared with the adult ovary.

The protein resides in the cytoplasm. Its function is as follows. Plays a central role during spermatogenesis by repressing transposable elements and preventing their mobilization, which is essential for the germline integrity. Acts via the piRNA metabolic process, which mediates the repression of transposable elements during meiosis by forming complexes composed of piRNAs and Piwi proteins and governs the methylation and subsequent repression of transposons. Its association with pi-bodies suggests a participation in the primary piRNAs metabolic process. Required prior to the pachytene stage to facilitate the production of multiple types of piRNAs, including those associated with repeats involved in the regulation of retrotransposons. May act by mediating protein-protein interactions during germ cell maturation. The sequence is that of Ankyrin repeat, SAM and basic leucine zipper domain-containing protein 1 from Homo sapiens (Human).